A 180-amino-acid chain; its full sequence is Large ribosomal subunit protein uL5 (180 aa).

This sequence belongs to the universal ribosomal protein uL5 family. In terms of assembly, part of the 50S ribosomal subunit; part of the 5S rRNA/L5/L18/L25 subcomplex. Contacts the 5S rRNA and the P site tRNA. Forms a bridge to the 30S subunit in the 70S ribosome.

This is one of the proteins that bind and probably mediate the attachment of the 5S RNA into the large ribosomal subunit, where it forms part of the central protuberance. In the 70S ribosome it contacts protein S13 of the 30S subunit (bridge B1b), connecting the 2 subunits; this bridge is implicated in subunit movement. Contacts the P site tRNA; the 5S rRNA and some of its associated proteins might help stabilize positioning of ribosome-bound tRNAs. In Streptococcus agalactiae serotype Ia (strain ATCC 27591 / A909 / CDC SS700), this protein is Large ribosomal subunit protein uL5.